Here is a 248-residue protein sequence, read N- to C-terminus: Triosephosphate isomerase (248 aa).

Residue 9-11 (NWK) participates in substrate binding. H94 acts as the Electrophile in catalysis. E166 acts as the Proton acceptor in catalysis. Residues G172, S212, and 233–234 (GG) contribute to the substrate site.

It belongs to the triosephosphate isomerase family. In terms of assembly, homodimer.

The protein resides in the cytoplasm. It catalyses the reaction D-glyceraldehyde 3-phosphate = dihydroxyacetone phosphate. The protein operates within carbohydrate biosynthesis; gluconeogenesis. Its pathway is carbohydrate degradation; glycolysis; D-glyceraldehyde 3-phosphate from glycerone phosphate: step 1/1. Functionally, involved in the gluconeogenesis. Catalyzes stereospecifically the conversion of dihydroxyacetone phosphate (DHAP) to D-glyceraldehyde-3-phosphate (G3P). This is Triosephosphate isomerase from Clostridium botulinum (strain Okra / Type B1).